Consider the following 1195-residue polypeptide: Cullin-associated NEDD8-dissociated protein 1 (1195 aa).

8 HEAT repeats span residues 1 to 37 (MHDINFNILKDRAMDVDPDIRFMALEDLRKFLQDESA), 45 to 83 (NQSLENFFPILLNMLNDQNPDVQTQAIKSFEPMVKYLSN), 168 to 206 (NPVTIDSIELLIDLVTEIGYVLTQDELLNLSLYLTKVAL), 397 to 434 (ELLSKEVLPVFSFADSNDQVVSEVIKSSIAIVNSTSPR), 436 to 474 (STNVSELFPIIAARMKLAKETQVPLFLKLVESLNRFDNT), 703 to 742 (ETHRAPLLQTIVKLVNEGKIEVADNSFFQFITTACNQIPD), 846 to 885 (QKHIDSAVPIILNAYESSEKTIIRGSLVDSLSIAADACNE), and 999 to 1037 (PILDSIILPKIFDQLQAEDSFKKIITMGPYKYVLDEGLE).

This sequence belongs to the CAND family.

Key assembly factor of SCF (SKP1-CUL1-F-box protein) E3 ubiquitin ligase complexes that promotes the exchange of the substrate-recognition F-box subunit in SCF complexes, thereby playing a key role in the cellular repertoire of SCF complexes. Acts as a F-box protein exchange factor. The sequence is that of Cullin-associated NEDD8-dissociated protein 1 (TIP120) from Candida albicans (strain SC5314 / ATCC MYA-2876) (Yeast).